Reading from the N-terminus, the 154-residue chain is Transcriptional repressor NrdR (154 aa).

A zinc finger lies at 3–34 (CPFCGANDTKVIDSRLVAEGEQVRRRRECLAC). In terms of domain architecture, ATP-cone spans 49–139 (PRLIKQDGSR…VYRRFQDLNE (91 aa)).

It belongs to the NrdR family. Zn(2+) serves as cofactor.

Its function is as follows. Negatively regulates transcription of bacterial ribonucleotide reductase nrd genes and operons by binding to NrdR-boxes. This Pseudomonas syringae pv. tomato (strain ATCC BAA-871 / DC3000) protein is Transcriptional repressor NrdR.